A 118-amino-acid polypeptide reads, in one-letter code: Large ribosomal subunit protein uL18 (118 aa).

Residues 1 to 24 are disordered; the sequence is MITKPDKNKIRQKRHRRVRGKLSG. Over residues 10–20 the composition is skewed to basic residues; sequence IRQKRHRRVRG.

It belongs to the universal ribosomal protein uL18 family. In terms of assembly, part of the 50S ribosomal subunit; part of the 5S rRNA/L5/L18/L25 subcomplex. Contacts the 5S and 23S rRNAs.

This is one of the proteins that bind and probably mediate the attachment of the 5S RNA into the large ribosomal subunit, where it forms part of the central protuberance. The polypeptide is Large ribosomal subunit protein uL18 (Streptococcus sanguinis (strain SK36)).